Consider the following 85-residue polypeptide: Sec-independent protein translocase protein TatA (85 aa).

A helical transmembrane segment spans residues 1–21 (MGSMSIWHWLVVGVLVLLLFG). Residues 39-85 (FKKGMSEEDEPTQPAEPRPTPRLQQQPPIEPNADPKLQPMQDDRPQH) are disordered.

This sequence belongs to the TatA/E family. In terms of assembly, the Tat system comprises two distinct complexes: a TatABC complex, containing multiple copies of TatA, TatB and TatC subunits, and a separate TatA complex, containing only TatA subunits. Substrates initially bind to the TatABC complex, which probably triggers association of the separate TatA complex to form the active translocon.

It localises to the cell inner membrane. Its function is as follows. Part of the twin-arginine translocation (Tat) system that transports large folded proteins containing a characteristic twin-arginine motif in their signal peptide across membranes. TatA could form the protein-conducting channel of the Tat system. This Rhizorhabdus wittichii (strain DSM 6014 / CCUG 31198 / JCM 15750 / NBRC 105917 / EY 4224 / RW1) (Sphingomonas wittichii) protein is Sec-independent protein translocase protein TatA.